The following is a 405-amino-acid chain: DNA primase DnaG (405 aa).

The 77-residue stretch at 172 to 248 folds into the Toprim domain; sequence DAIIIVEGRA…HVDYIARAPP (77 aa). Mg(2+)-binding residues include glutamate 178, aspartate 222, and aspartate 224. The segment at 279-303 is disordered; that stretch reads ASGERAEAPPQPAQQPQQEQPAPQR. The segment covering 292–303 has biased composition (low complexity); sequence QQPQQEQPAPQR.

Belongs to the archaeal DnaG primase family. Forms a ternary complex with MCM helicase and DNA. Component of the archaeal exosome complex. Requires Mg(2+) as cofactor.

The enzyme catalyses ssDNA + n NTP = ssDNA/pppN(pN)n-1 hybrid + (n-1) diphosphate.. RNA polymerase that catalyzes the synthesis of short RNA molecules used as primers for DNA polymerase during DNA replication. Also part of the exosome, which is a complex involved in RNA degradation. Acts as a poly(A)-binding protein that enhances the interaction between heteromeric, adenine-rich transcripts and the exosome. The sequence is that of DNA primase DnaG from Pyrobaculum arsenaticum (strain DSM 13514 / JCM 11321 / PZ6).